A 210-amino-acid chain; its full sequence is Protein GET1 (210 aa).

The Lumenal portion of the chain corresponds to 1–4; that stretch reads MPSL. A helical membrane pass occupies residues 5–24; it reads LIIVLIIHVVTYLINTIGAN. Residues 25 to 110 are Cytoplasmic-facing; it reads TIDSLLWLLY…SFDLAVKSIR (86 aa). Positions 39–95 form a coiled coil; the sequence is NQTSQTANEQRRLKREVMQLKREMNATSSQDEFAKWAKLRRRHDKTMEEYEAKNKAL. Residues 111–131 form a helical membrane-spanning segment; that stretch reads FFSTTGLKLFLQFWCSKTPIF. Topologically, residues 132–155 are lumenal; it reads ELPRGWIPWQVEWVLSFPRAPLGT. A helical transmembrane segment spans residues 156 to 172; that stretch reads VSIQIWGGVCATVVSLA. Over 173–210 the chain is Cytoplasmic; it reads GDAIGVVNVYLTSKAPKQKEPATSGENSARPMAIKKEL. The segment at 189-210 is disordered; sequence KQKEPATSGENSARPMAIKKEL.

It belongs to the WRB/GET1 family. In terms of assembly, interacts with GET3.

Its subcellular location is the endoplasmic reticulum membrane. In terms of biological role, required for the post-translational delivery of tail-anchored (TA) proteins to the endoplasmic reticulum. Acts as a membrane receptor for soluble GET3, which recognizes and selectively binds the transmembrane domain of TA proteins in the cytosol. This Coccidioides immitis (strain RS) (Valley fever fungus) protein is Protein GET1.